Here is a 30-residue protein sequence, read N- to C-terminus: Cyclotide psyleio E (30 aa).

A cross-link (cyclopeptide (Ser-Lys)) is located at residues 1–30; the sequence is SVTPIVCGETCFGGTCNTPGCSCSWPICTK. Intrachain disulfides connect C7/C21, C11/C23, and C16/C28.

In terms of processing, this is a cyclic peptide.

Probably participates in a plant defense mechanism. This is Cyclotide psyleio E from Psychotria leiocarpa.